Reading from the N-terminus, the 198-residue chain is MTAQNENAQAQAEQVEVANEAQLEQTAEIQQEQPVEAELAAAYARINELETYVAEADNREKDIQLRAQAEIQNIRRRAEQDVEKAHKFALEKFSKELLTVVDNLERGLNALDTAVTDEKTQALVDGVEMTHKEFISTLAKFGVEAVGVVGEAFNPEVHEAISMQPAEGIEANHISVVLQKGYTLQGRVLRPAMVMVAG.

The protein belongs to the GrpE family. As to quaternary structure, homodimer.

It localises to the cytoplasm. Participates actively in the response to hyperosmotic and heat shock by preventing the aggregation of stress-denatured proteins, in association with DnaK and GrpE. It is the nucleotide exchange factor for DnaK and may function as a thermosensor. Unfolded proteins bind initially to DnaJ; upon interaction with the DnaJ-bound protein, DnaK hydrolyzes its bound ATP, resulting in the formation of a stable complex. GrpE releases ADP from DnaK; ATP binding to DnaK triggers the release of the substrate protein, thus completing the reaction cycle. Several rounds of ATP-dependent interactions between DnaJ, DnaK and GrpE are required for fully efficient folding. The chain is Protein GrpE from Actinobacillus pleuropneumoniae serotype 5b (strain L20).